A 516-amino-acid chain; its full sequence is Zinc finger protein 83 (516 aa).

A disordered region spans residues 1 to 20 (MHGRKDDAQKQPVKNQLGLN). A C2H2-type 1; degenerate zinc finger spans residues 93-115 (YKCSERGKAFHQGLHFTIHQIIH). 14 consecutive C2H2-type zinc fingers follow at residues 121–143 (FKCDICGKIFNKKSNLASHQRIH), 149–171 (YKCNECGKVFHNMSHLAQHRRIH), 177–199 (YKCNECGKVFNQISHLAQHQRIH), 205–227 (YKCNECGKVFHQISHLAQHRTIH), 233–255 (YECNKCGKVFSRNSYLVQHLIIH), 261–283 (YRCNVCGKVFHHISHLAQHQRIH), 289–311 (YKCNECGKVFSHKSSLVNHWRIH), 317–339 (YKCNECGKVFSHKSSLVNHWRIH), 345–367 (YKCNECGKVFSRNSYLAQHLIIH), 373–395 (YKCDECDKAFSQNSHLVQHHRIH), 401–423 (YKCDECGKVFSQNSYLAYHWRIH), 429–451 (YKCNECGKVFGLNSSLAHHRKIH), 457–479 (FKCNECGKAFSMRSSLTNHHAIH), and 485–507 (FKCNECGKLFRDNSYLVRHQRFH).

The protein belongs to the krueppel C2H2-type zinc-finger protein family.

It localises to the nucleus. In terms of biological role, may be involved in transcriptional regulation. This chain is Zinc finger protein 83 (ZNF83), found in Homo sapiens (Human).